The chain runs to 201 residues: Recombination protein RecR (201 aa).

The segment at 59 to 74 (CEICGNMDTENICRIC) adopts a C4-type zinc-finger fold. The region spanning 82–177 (SIIAIVETVA…KISRLASGIP (96 aa)) is the Toprim domain.

Belongs to the RecR family.

In terms of biological role, may play a role in DNA repair. It seems to be involved in an RecBC-independent recombinational process of DNA repair. It may act with RecF and RecO. The chain is Recombination protein RecR from Rickettsia peacockii (strain Rustic).